Reading from the N-terminus, the 93-residue chain is Large ribosomal subunit protein uL23cz/uL23cy (93 aa).

Belongs to the universal ribosomal protein uL23 family. As to quaternary structure, part of the 50S ribosomal subunit.

It is found in the plastid. The protein localises to the chloroplast. In terms of biological role, binds to 23S rRNA. This is Large ribosomal subunit protein uL23cz/uL23cy (rpl23-A) from Nymphaea alba (White water-lily).